A 105-amino-acid chain; its full sequence is N(4)-acetylcytidine amidohydrolase (105 aa).

One can recognise an ASCH domain in the interval 7–93; it reads TFFERFEHDI…VIAEIYPGLE (87 aa). The active-site Proton acceptor is the K21. T24 functions as the Nucleophile in the catalytic mechanism. Catalysis depends on E74, which acts as the Proton donor.

The protein belongs to the N(4)-acetylcytidine amidohydrolase family.

The catalysed reaction is N(4)-acetylcytidine + H2O = cytidine + acetate + H(+). It catalyses the reaction N(4)-acetyl-2'-deoxycytidine + H2O = 2'-deoxycytidine + acetate + H(+). It carries out the reaction N(4)-acetylcytosine + H2O = cytosine + acetate + H(+). In terms of biological role, catalyzes the hydrolysis of N(4)-acetylcytidine (ac4C). The sequence is that of N(4)-acetylcytidine amidohydrolase from Shewanella baltica (strain OS195).